The primary structure comprises 226 residues: Isoprenyl transferase (226 aa).

Asp12 is an active-site residue. Residue Asp12 coordinates Mg(2+). Substrate is bound by residues Gly13–Arg16, Trp17, Lys25, His29, and Ser57–Glu59. Residue Asn60 is the Proton acceptor of the active site. Substrate contacts are provided by residues Trp61, Arg63, Arg174, and Arg180–Ser182. Mg(2+) is bound at residue Glu193.

It belongs to the UPP synthase family. In terms of assembly, homodimer. Mg(2+) is required as a cofactor.

In terms of biological role, catalyzes the condensation of isopentenyl diphosphate (IPP) with allylic pyrophosphates generating different type of terpenoids. In Rickettsia bellii (strain RML369-C), this protein is Isoprenyl transferase.